The following is a 357-amino-acid chain: Arginine kinase Met e 2 (357 aa).

The region spanning 9 to 91 is the Phosphagen kinase N-terminal domain; that stretch reads KLEAGFKKLE…FDPIIEDYHV (83 aa). Residue 64–68 coordinates L-arginine; sequence GVGIY. The region spanning 119-356 is the Phosphagen kinase C-terminal domain; that stretch reads FVISTRVRCG…LELIKIEKEM (238 aa). Residues 122–126 and His-185 each bind ATP; that span reads STRVR. Glu-225 contributes to the L-arginine binding site. Arg-229 contacts ATP. Residue Cys-271 participates in L-arginine binding. ATP is bound by residues 280–284 and 309–314; these read RASVH and RGTRGE. L-arginine is bound at residue Glu-314.

Belongs to the ATP:guanido phosphotransferase family.

It catalyses the reaction L-arginine + ATP = N(omega)-phospho-L-arginine + ADP + H(+). Catalyzes the reversible transfer of high energy ATP gamma-phosphate group to L-arginine. The protein is Arginine kinase Met e 2 of Metapenaeus ensis (Greasyback shrimp).